We begin with the raw amino-acid sequence, 300 residues long: 4-hydroxy-tetrahydrodipicolinate synthase (300 aa).

Thr55 lines the pyruvate pocket. Residue Tyr143 is the Proton donor/acceptor of the active site. Residue Lys171 is the Schiff-base intermediate with substrate of the active site. Ile211 is a pyruvate binding site.

It belongs to the DapA family. Homotetramer; dimer of dimers.

The protein localises to the cytoplasm. The enzyme catalyses L-aspartate 4-semialdehyde + pyruvate = (2S,4S)-4-hydroxy-2,3,4,5-tetrahydrodipicolinate + H2O + H(+). It participates in amino-acid biosynthesis; L-lysine biosynthesis via DAP pathway; (S)-tetrahydrodipicolinate from L-aspartate: step 3/4. Functionally, catalyzes the condensation of (S)-aspartate-beta-semialdehyde [(S)-ASA] and pyruvate to 4-hydroxy-tetrahydrodipicolinate (HTPA). The chain is 4-hydroxy-tetrahydrodipicolinate synthase from Mycobacterium bovis (strain ATCC BAA-935 / AF2122/97).